The following is a 1437-amino-acid chain: Protein CC2D2B (1437 aa).

The chain is Protein CC2D2B from Homo sapiens (Human).